Here is a 334-residue protein sequence, read N- to C-terminus: Ornithine carbamoyltransferase, catabolic (334 aa).

Carbamoyl phosphate is bound by residues 57 to 60, Gln84, Arg108, and 135 to 138; these read STRT and HPTQ. Residues Asn168, Asp232, and 236–237 each bind L-ornithine; that span reads SM. Residues 274-275 and Arg321 contribute to the carbamoyl phosphate site; that span reads CL.

It belongs to the aspartate/ornithine carbamoyltransferase superfamily. OTCase family.

It localises to the cytoplasm. The catalysed reaction is carbamoyl phosphate + L-ornithine = L-citrulline + phosphate + H(+). It participates in amino-acid degradation; L-arginine degradation via ADI pathway; carbamoyl phosphate from L-arginine: step 2/2. In terms of biological role, reversibly catalyzes the transfer of the carbamoyl group from carbamoyl phosphate (CP) to the N(epsilon) atom of ornithine (ORN) to produce L-citrulline. In Avibacterium paragallinarum (Haemophilus gallinarum), this protein is Ornithine carbamoyltransferase, catabolic (arcB).